Here is a 396-residue protein sequence, read N- to C-terminus: Phosphoglycerate kinase (396 aa).

Substrate is bound by residues 21–23 (DFN), Arg-37, 60–63 (HLGR), Arg-121, and Arg-154. ATP-binding positions include Lys-205, Gly-296, Glu-327, and 353–356 (GGDS).

It belongs to the phosphoglycerate kinase family. As to quaternary structure, monomer.

It localises to the cytoplasm. The catalysed reaction is (2R)-3-phosphoglycerate + ATP = (2R)-3-phospho-glyceroyl phosphate + ADP. Its pathway is carbohydrate degradation; glycolysis; pyruvate from D-glyceraldehyde 3-phosphate: step 2/5. The protein is Phosphoglycerate kinase of Anaeromyxobacter dehalogenans (strain 2CP-C).